Reading from the N-terminus, the 137-residue chain is Protein Turandot X (137 aa).

Residues 1 to 24 form the signal peptide; the sequence is MRVPVFQLSCLLGLIVCLLCSVKA.

This sequence belongs to the Turandot family.

It is found in the secreted. A humoral factor that may play a role in stress tolerance. In Drosophila pseudoobscura pseudoobscura (Fruit fly), this protein is Protein Turandot X.